A 72-amino-acid chain; its full sequence is Translation initiation factor IF-1 (72 aa).

An S1-like domain is found at 1 to 72 (MSKEDVIEVE…TRGRITWRKK (72 aa)).

The protein belongs to the IF-1 family. Component of the 30S ribosomal translation pre-initiation complex which assembles on the 30S ribosome in the order IF-2 and IF-3, IF-1 and N-formylmethionyl-tRNA(fMet); mRNA recruitment can occur at any time during PIC assembly.

The protein resides in the cytoplasm. Functionally, one of the essential components for the initiation of protein synthesis. Stabilizes the binding of IF-2 and IF-3 on the 30S subunit to which N-formylmethionyl-tRNA(fMet) subsequently binds. Helps modulate mRNA selection, yielding the 30S pre-initiation complex (PIC). Upon addition of the 50S ribosomal subunit IF-1, IF-2 and IF-3 are released leaving the mature 70S translation initiation complex. This Alkaliphilus metalliredigens (strain QYMF) protein is Translation initiation factor IF-1.